The following is a 360-amino-acid chain: Isocitrate dehydrogenase [NAD] subunit 1, mitochondrial (360 aa).

Residues 1–11 (MLNRTIAKRTL) constitute a mitochondrion transit peptide. 3 residues coordinate substrate: arginine 109, arginine 140, and aspartate 228. Aspartate 228 provides a ligand contact to Mg(2+).

The protein belongs to the isocitrate and isopropylmalate dehydrogenases family. As to quaternary structure, octamer of two non-identical subunits IDH1 and IDH2. Mg(2+) serves as cofactor. Requires Mn(2+) as cofactor.

The protein localises to the mitochondrion. The enzyme catalyses D-threo-isocitrate + NAD(+) = 2-oxoglutarate + CO2 + NADH. With respect to regulation, allosterically regulated by several compounds including AMP, NAD(+), and citrate. Its function is as follows. Performs an essential role in the oxidative function of the citric acid cycle. Also binds RNA; specifically to the 5'-untranslated leaders of mitochondrial mRNAs. This chain is Isocitrate dehydrogenase [NAD] subunit 1, mitochondrial (IDH1), found in Saccharomyces cerevisiae (strain ATCC 204508 / S288c) (Baker's yeast).